Reading from the N-terminus, the 226-residue chain is Sugar fermentation stimulation protein homolog (226 aa).

Belongs to the SfsA family.

This chain is Sugar fermentation stimulation protein homolog, found in Picrophilus torridus (strain ATCC 700027 / DSM 9790 / JCM 10055 / NBRC 100828 / KAW 2/3).